A 324-amino-acid polypeptide reads, in one-letter code: Pepsin-2B (324 aa).

The Peptidase A1 domain maps to 14–321; that stretch reads YYGVISIGTP…DRTNNKVGFA (308 aa). The active site involves D32. C45 and C50 are oxidised to a cystine. Residues 86–109 are disordered; it reads QDTVSVGGGSDPNQELGESQTEPG. Residues 96-107 show a composition bias toward polar residues; the sequence is DPNQELGESQTE. Residues C206 and C209 are joined by a disulfide bond. D214 is an active-site residue. A disulfide bond links C247 and C280.

The protein belongs to the peptidase A1 family.

The chain is Pepsin-2B from Gadus morhua (Atlantic cod).